The following is a 336-amino-acid chain: Holliday junction branch migration complex subunit RuvB (336 aa).

Residues 1 to 182 (MKERIVNLET…FGMSFRMQFY (182 aa)) are large ATPase domain (RuvB-L). Residues L21, R22, G63, K66, T67, S68, 129–131 (EDF), R172, Y182, and R219 contribute to the ATP site. Residue T67 participates in Mg(2+) binding. A small ATPAse domain (RuvB-S) region spans residues 183–253 (SPSELALIIK…ITLHALNELG (71 aa)). Positions 256 to 336 (ELGFDEADLA…IPTLKSQTLF (81 aa)) are head domain (RuvB-H). DNA contacts are provided by R310 and R315.

Belongs to the RuvB family. As to quaternary structure, homohexamer. Forms an RuvA(8)-RuvB(12)-Holliday junction (HJ) complex. HJ DNA is sandwiched between 2 RuvA tetramers; dsDNA enters through RuvA and exits via RuvB. An RuvB hexamer assembles on each DNA strand where it exits the tetramer. Each RuvB hexamer is contacted by two RuvA subunits (via domain III) on 2 adjacent RuvB subunits; this complex drives branch migration. In the full resolvosome a probable DNA-RuvA(4)-RuvB(12)-RuvC(2) complex forms which resolves the HJ.

The protein localises to the cytoplasm. It catalyses the reaction ATP + H2O = ADP + phosphate + H(+). Functionally, the RuvA-RuvB-RuvC complex processes Holliday junction (HJ) DNA during genetic recombination and DNA repair, while the RuvA-RuvB complex plays an important role in the rescue of blocked DNA replication forks via replication fork reversal (RFR). RuvA specifically binds to HJ cruciform DNA, conferring on it an open structure. The RuvB hexamer acts as an ATP-dependent pump, pulling dsDNA into and through the RuvAB complex. RuvB forms 2 homohexamers on either side of HJ DNA bound by 1 or 2 RuvA tetramers; 4 subunits per hexamer contact DNA at a time. Coordinated motions by a converter formed by DNA-disengaged RuvB subunits stimulates ATP hydrolysis and nucleotide exchange. Immobilization of the converter enables RuvB to convert the ATP-contained energy into a lever motion, pulling 2 nucleotides of DNA out of the RuvA tetramer per ATP hydrolyzed, thus driving DNA branch migration. The RuvB motors rotate together with the DNA substrate, which together with the progressing nucleotide cycle form the mechanistic basis for DNA recombination by continuous HJ branch migration. Branch migration allows RuvC to scan DNA until it finds its consensus sequence, where it cleaves and resolves cruciform DNA. This chain is Holliday junction branch migration complex subunit RuvB, found in Helicobacter pylori (strain HPAG1).